The primary structure comprises 348 residues: Alcohol dehydrogenase 1 (348 aa).

Zn(2+) is bound by residues Cys44, His67, Cys98, Cys101, Cys104, Cys112, and Cys154. NAD(+)-binding positions include 178-184, Asp202, Lys207, 269-271, and Arg341; these read GACGGLG and VGL.

Belongs to the zinc-containing alcohol dehydrogenase family. As to quaternary structure, homotetramer. It depends on Zn(2+) as a cofactor.

The protein localises to the cytoplasm. It carries out the reaction a primary alcohol + NAD(+) = an aldehyde + NADH + H(+). The enzyme catalyses a secondary alcohol + NAD(+) = a ketone + NADH + H(+). The chain is Alcohol dehydrogenase 1 (ADH1) from Kluyveromyces marxianus (Yeast).